The primary structure comprises 62 residues: UPF0370 protein ESA_00777 (62 aa).

A helical transmembrane segment spans residues 4 to 24 (LGKYWWVLVLVFLLGVLLNVI). Basic and acidic residues predominate over residues 36–51 (MDNRPELPPHRDFNDK). The tract at residues 36 to 62 (MDNRPELPPHRDFNDKWDDEDDWPKKK) is disordered. A compositionally biased stretch (acidic residues) spans 52-62 (WDDEDDWPKKK).

The protein belongs to the UPF0370 family.

The protein localises to the cell membrane. This chain is UPF0370 protein ESA_00777, found in Cronobacter sakazakii (strain ATCC BAA-894) (Enterobacter sakazakii).